Here is a 423-residue protein sequence, read N- to C-terminus: Serine--tRNA ligase (423 aa).

A disordered region spans residues 107-130 (PHDSVPDGKSENDNREIRQWGAPP). The span at 110 to 124 (SVPDGKSENDNREIR) shows a compositional bias: basic and acidic residues. 231-233 (TGE) serves as a coordination point for L-serine. 262–264 (RSE) is an ATP binding site. Glu285 contributes to the L-serine binding site. Position 349–352 (349–352 (EISS)) interacts with ATP. L-serine is bound at residue Ser385.

It belongs to the class-II aminoacyl-tRNA synthetase family. Type-1 seryl-tRNA synthetase subfamily. As to quaternary structure, homodimer. The tRNA molecule binds across the dimer.

It is found in the cytoplasm. It catalyses the reaction tRNA(Ser) + L-serine + ATP = L-seryl-tRNA(Ser) + AMP + diphosphate + H(+). The catalysed reaction is tRNA(Sec) + L-serine + ATP = L-seryl-tRNA(Sec) + AMP + diphosphate + H(+). It participates in aminoacyl-tRNA biosynthesis; selenocysteinyl-tRNA(Sec) biosynthesis; L-seryl-tRNA(Sec) from L-serine and tRNA(Sec): step 1/1. Catalyzes the attachment of serine to tRNA(Ser). Is also able to aminoacylate tRNA(Sec) with serine, to form the misacylated tRNA L-seryl-tRNA(Sec), which will be further converted into selenocysteinyl-tRNA(Sec). This is Serine--tRNA ligase from Coxiella burnetii (strain Dugway 5J108-111).